Reading from the N-terminus, the 187-residue chain is MRCTSPAALVTFCAGLWISNHVLAQGLEAGVRSRADCEVCKEFLNRFYNSLLTRGIDFSVDTIEEELISFCADTKGKENRLCYYLGATKDSATKILGEVTRPMSVHMPTVKICEKLKKMDSQICELKYEKKLDLESVDLWKMRVAELKQILHSWGEECRACAEKHDYVNLIKELAPKYVETRPQTEL.

Residues Met1 to Ala24 form the signal peptide. 3 disulfide bridges follow: Cys37–Cys124, Cys40–Cys113, and Cys71–Cys82.

This sequence belongs to the ARMET family.

The protein resides in the secreted. Its function is as follows. Trophic factor for dopamine neurons. Prevents the 6-hydroxydopamine (6-OHDA)-induced degeneration of dopaminergic neurons. When administered after 6-OHDA-lesioning, restores the dopaminergic function and prevents the degeneration of dopaminergic neurons in substantia nigra. The protein is Cerebral dopamine neurotrophic factor (Cdnf) of Rattus norvegicus (Rat).